We begin with the raw amino-acid sequence, 467 residues long: uncharacterized protein (467 aa).

Sel1-like repeat units follow at residues 38–73 (PAAAFELAKHLMDADSPYQDREQGMEMLRIAAEQGH), 107–138 (PEAQVRLMYLLYASRHFEEALEWAKTSAKNNN), 139–172 (PHGQYLLAQYCRYGTPPDFETAHLLYRKSAAQGL), 173–208 (PEAHWQLGLQYRFGQGTKVDTAQAVNHLRAAAQQGY), 240–275 (PDAHAALADIYLQGKHLERNHKLALHHAEAAAAERH), 276–311 (PEGLRILGDICRYGLGIAPDTEKARHYYRQAAEAGS), 343–378 (AERLYQKAQALHYGLQCAPEYAAALKLYTEAAELGH), 379–414 (SKAQTNLGSMYYFGQGMTADYNEARKWFEKAAAKKD), and 415–450 (SMAFYNLACIHYSGHGVEPDKEKACRYLQEAINNGY).

This is an uncharacterized protein from Neisseria meningitidis serogroup B (strain ATCC BAA-335 / MC58).